The chain runs to 516 residues: Histidine ammonia-lyase (516 aa).

Positions 143–145 form a cross-link, 5-imidazolinone (Ala-Gly); that stretch reads ASG. Serine 144 carries the 2,3-didehydroalanine (Ser) modification.

This sequence belongs to the PAL/histidase family. Post-translationally, contains an active site 4-methylidene-imidazol-5-one (MIO), which is formed autocatalytically by cyclization and dehydration of residues Ala-Ser-Gly.

Its subcellular location is the cytoplasm. It carries out the reaction L-histidine = trans-urocanate + NH4(+). It functions in the pathway amino-acid degradation; L-histidine degradation into L-glutamate; N-formimidoyl-L-glutamate from L-histidine: step 1/3. The sequence is that of Histidine ammonia-lyase from Koribacter versatilis (strain Ellin345).